A 1324-amino-acid chain; its full sequence is MHRPRSSWPNLVWDHSFPHHVLTQGKYTTIPYRTYICLQGNETSLKEAEWAIRNDNPRALVKSYNKELWTFTLQEGVTPPSALDRFQLTETTTGVFLPSTTTPSSLTMTKQLTPPGYVALMLAIEAMIQEALKRDDHYVPFGNNLILPVTGDLLHLDARLTPGGDLLLQMYQQETEWEMFGKRKRDVANEIVGTKVVVAPTLVEGVVENSTNQIPDNLPVLLEMLDCLCSVRLRAKKQWTAVRIDTEVLLWPTELLFVDRKSATGKLEDEGKDALLWTEDILDSVFEATQLIRRGESGVNTNESTAAQPQPAQNGTNSMAPAAGTTNATTQRNEENKQIYPTPPEAPKRILPGILLERATAPAGGWGELDEELFGGDEVTEADFNFFDDMGGDKNDTDGDNDNGNDNDNDKADAMDVDVKEEAKKEEMIKKETKEEVPVKEEVQEEEPDESATTAALLTNNPAEEKAVVHGVNDSSTVNGAVDAAVSATVVSSVPYLPSDFDQLIVNPAEQRTFALVEFNREAEQRLNDKYAAGGRFFVPDDSSSDNEGSSDNTGDSSDSGDGSESVPRDVKRQKVDEGTLSDQTDEPEIDAKQLHQQWSAILNYNHDDKPAKKIDSSNDTTNSDGNSNNSNYEEAVQRLAEQVVWDNSCYKGLVPQENYYRPPSARFVKVVEQVFGDTSKRLSLIDFAKMSDKGGQQQPGVGMPINAAAGTAGGGPGTPVTVSNASGVPSGSSGAQASQMGALAVGSALSPSRGATPQPEGSSPETRPSNWTPGITSQVNSAASSPVPLQQHQQQQQSFSPMSPQTPAQAPVPSANSFANAANAAPTQRLATPMYSFMRGGSLIKAQPPILRFWSTFGLSPRNGPKPLTLTLIYPSGTAIGDAAAAFLISFKMCYEGCGFGLVTLGGSNGTGVVSSDYKNLDVSREGVLLVSNPYNDVLGFLNLAKAAAAGSKTATSTSTILTLPCSIFASYTALRAPSAMLLAALCRNLYDHLPPTSTKRRYGSVIQRQAPACVISKPVPPFINFKLLANTPDSVINEDSLLHVAYAASNRWITCAWSDQWGELAKVKVFCLQSESGPLRTLEEVCTEIWETTLQLNGSTDVRSVAVAKLGGMLDDELAMWLRVSSVTRGRRITPFFLVVDNRPSMVVTGSDDGSKGGNVAGGPAPAPPTGAAGAASTGSAPMSTPFRDTDSPDIYNHVTTPSVGEDKIDYDDMSIVDVHDEIHSVTLNHRQPLTMHSTRLGLATGYLVKTSPLNPNQLLVFSLTFVNCPCVVMHVAMKHFLRQYRNLISLAATTGVCDPEYAIVPWHVEAVDKMMRLVEEL.

Disordered stretches follow at residues Glu-296 to Ala-346, Phe-386 to Ala-455, Gly-535 to Ile-590, His-607 to Ser-631, Lys-694 to Ala-816, and Thr-1151 to Tyr-1198. Polar residues predominate over residues Gly-298–Gln-331. Positions Asp-398–Asn-407 are enriched in acidic residues. The span at Asp-408–Glu-442 shows a compositional bias: basic and acidic residues. Positions Asp-546–Ser-566 are enriched in low complexity. Composition is skewed to basic and acidic residues over residues Val-567 to Glu-578 and His-607 to Ser-617. Composition is skewed to low complexity over residues Ser-618–Ser-631 and Ser-724–Ala-743. The span at Leu-750–Ala-784 shows a compositional bias: polar residues. 2 stretches are compositionally biased toward low complexity: residues Ser-785 to Ala-816 and Thr-1172 to Pro-1184.

The protein belongs to the Mediator complex subunit 13 family. As to quaternary structure, component of the SRB8-11 complex, which itself associates with the Mediator complex.

Its subcellular location is the nucleus. Functionally, component of the SRB8-11 complex. The SRB8-11 complex is a regulatory module of the Mediator complex which is itself involved in regulation of basal and activated RNA polymerase II-dependent transcription. The SRB8-11 complex may be involved in the transcriptional repression of a subset of genes regulated by Mediator. It may inhibit the association of the Mediator complex with RNA polymerase II to form the holoenzyme complex. The polypeptide is Mediator of RNA polymerase II transcription subunit 13 (SSN2) (Yarrowia lipolytica (strain CLIB 122 / E 150) (Yeast)).